The following is a 273-amino-acid chain: SAGA-associated factor 29 homolog B (273 aa).

The SGF29 C-terminal domain maps to 128 to 273 (EAYASLKGEQ…VVALPEGHRQ (146 aa)). 2 histone H3K4me3 N-terminus binding regions span residues 171-173 (DEE) and 220-223 (GTTA). The segment at 245–248 (FDDD) is histone H3K4me3 binding.

This sequence belongs to the SGF29 family. As to expression, expressed in roots, rosette leaves, cauline leaves, stems and flowers.

The protein localises to the nucleus. Chromatin reader component of the transcription regulatory histone acetylation (HAT) complex SAGA. This is SAGA-associated factor 29 homolog B from Arabidopsis thaliana (Mouse-ear cress).